We begin with the raw amino-acid sequence, 462 residues long: Argininosuccinate lyase (462 aa).

The protein belongs to the lyase 1 family. Argininosuccinate lyase subfamily.

It is found in the cytoplasm. The enzyme catalyses 2-(N(omega)-L-arginino)succinate = fumarate + L-arginine. It participates in amino-acid biosynthesis; L-arginine biosynthesis; L-arginine from L-ornithine and carbamoyl phosphate: step 3/3. The chain is Argininosuccinate lyase from Exiguobacterium sp. (strain ATCC BAA-1283 / AT1b).